The primary structure comprises 2731 residues: Teneurin-1 (2731 aa).

A disordered region spans residues 1 to 72; it reads MEQTDCKPYQ…KRKDVEKSTQ (72 aa). The region spanning 1 to 318 is the Teneurin N-terminal domain; it reads MEQTDCKPYQ…KPYRCCNWKC (318 aa). The Cytoplasmic segment spans residues 1–324; it reads MEQTDCKPYQ…NWKCTALSAT (324 aa). Over residues 44–55 the composition is skewed to basic and acidic residues; it reads ETLHEYNQELRR. The Nuclear localization signal (NLS) motif lies at 62 to 65; sequence RKRK. Serine 105 bears the Phosphoserine mark. At threonine 109 the chain carries Phosphothreonine. The residue at position 116 (serine 116) is a Phosphoserine. A disordered region spans residues 175-241; that stretch reads DSAQDMQSSP…PAPPTSTQDS (67 aa). Residues 178–189 are compositionally biased toward polar residues; sequence QDMQSSPHNQFT. Pro residues predominate over residues 192–201; the sequence is PLPPPPPPPH. Positions 214–224 are enriched in polar residues; the sequence is DSLQRRSMTTR. The Required for interaction with SORBS1 (Ten-1 ICD form) motif lies at 290 to 297; that stretch reads PPPRPLPR. A helical transmembrane segment spans residues 325–345; that stretch reads AITVTLALLLAYVIAVHLFGL. The Extracellular segment spans residues 346–2731; the sequence is TWQLQPVGQI…FMRQSEIGRR (2386 aa). A glycan (N-linked (GlcNAc...) asparagine) is linked at asparagine 432. 8 consecutive EGF-like domains span residues 527 to 558, 559 to 590, 591 to 623, 624 to 656, 657 to 690, 691 to 720, 721 to 752, and 760 to 795; these read IMDDCSTNCNGNGECISGHCHCFPGFLGPDCA, RDSCPVLCGGNGEYEKGHCVCRNGWKGPECDV, PEEQCIDPTCFGHGTCIMGVCICVPGYKGEICE, EEDCLDPMCSSHGICVKGECHCSTGWGGVNCET, PLPICQEQCSGHGTFLLDTGVCSCDPKWTGSDCS, TELCTMECGSHGVCSRGICQCEEGWVGPTC, EERSCHSHCAEHGQCKDGKCECSPGWEGDHCT, and VRDGCPGLCFGNGRCTLDQNGWHCVCQVGWSGTGCN. Cystine bridges form between cysteine 531–cysteine 541, cysteine 535–cysteine 546, cysteine 548–cysteine 557, cysteine 566–cysteine 577, cysteine 579–cysteine 588, cysteine 595–cysteine 606, cysteine 600–cysteine 611, cysteine 613–cysteine 622, cysteine 627–cysteine 638, cysteine 632–cysteine 643, cysteine 645–cysteine 654, cysteine 665–cysteine 678, cysteine 680–cysteine 689, cysteine 694–cysteine 704, cysteine 698–cysteine 709, cysteine 711–cysteine 720, cysteine 725–cysteine 735, cysteine 729–cysteine 740, cysteine 742–cysteine 751, cysteine 764–cysteine 774, cysteine 768–cysteine 783, and cysteine 785–cysteine 794. N-linked (GlcNAc...) asparagine glycans are attached at residues asparagine 904 and asparagine 1083. NHL repeat units follow at residues 1193 to 1218, 1298 to 1342, 1357 to 1408, 1420 to 1464, and 1487 to 1530; these read LFAPVALASGPDGSVYVGDFNFVRRI, SHCG…NAVI, LSCD…IAGR, FLVS…VTTN, and CFSG…ISKN. Residues 1540–1559 form a YD 1 repeat; it reads YEIASPADQELYQFTVNGTH. 2 N-linked (GlcNAc...) asparagine glycosylation sites follow: asparagine 1556 and asparagine 1573. YD repeat units follow at residues 1576 to 1596, 1614 to 1638, 1639 to 1660, and 1661 to 1681; these read YNAEGDLGAITSSNGNSVHIR, YWLTISSNGVLKRVSAQGYNLALMT, YPGNTGLLATKSNENGWTTVYE, and YDPEGHLTNATFPTGEVSSFH. Asparagine 1669, asparagine 1705, asparagine 1743, asparagine 1763, asparagine 1787, and asparagine 1848 each carry an N-linked (GlcNAc...) asparagine glycan. YD repeat units follow at residues 1851–1870, 1871–1891, 1892–1910, 1911–1931, 1939–1955, 1956–1975, 1976–1995, 1998–2018, 2021–2041, 2091–2111, and 2119–2139; these read YSPSGLVTFIQRGTWNEKME, YDQSGKIISRTWADGKIWSYT, YLEKSVMLLLHSQRRYIFE, YDQSDCLLSVTMPSMVRHSLQ, YRNIYTPPDSSTSFIQD, YSRDGRLLQTLHLGTGRRVL, YKYTKQARLSEILYDTTQVT, YEESSGVIKTIHLMHDGFICT, YRQTGPLIGRQIFRFSEEGLV, YDLNQVITTTVMKHTKIFNAN, and YEILKAIAYWMTIQYDNMGRM. The N-linked (GlcNAc...) asparagine glycan is linked to asparagine 2151. YD repeat units follow at residues 2159 to 2179, 2180 to 2200, 2202 to 2222, 2234 to 2254, and 2256 to 2276; these read YDADGQLQTVSVNDKIQWRYS, YDLNGNINLLSHGNSARLTPL, YDLRDRITRLGEIQYKMDEDG, YNSNGLLQKAYNKVSGWTVQY, and YDGLGRRVASKSSLGQHLQFF. Residue asparagine 2291 is glycosylated (N-linked (GlcNAc...) asparagine). YD repeat units lie at residues 2302–2319 and 2320–2343; these read YDLQGHLIAMELSSGEEY and YVACDNMGTPLAVFSSRGQVIKEI. The residue at position 2586 (serine 2586) is a Phosphoserine. A glycan (N-linked (GlcNAc...) asparagine) is linked at asparagine 2608.

It belongs to the tenascin family. Teneurin subfamily. In terms of assembly, homodimer; disulfide-linked. Heterodimer with either TENM2 or TENM3. May also form heterodimer with TENM4. Ten-1 ICD interacts with SORBS1 (via third SH3 domain). Interacts with MBD1 isoform 2. Ten-1 ICD interacts with HINT1. In terms of processing, once secreted, may also be cleaved to give rise to the TCAP-1 form. Derives from the plasma membrane form by proteolytic processing. Further proteolytic cleavage may generate 11.9 and 4.7 kDa bioactive peptides. As to expression, isoform 1 and isoform 2 are expressed in the brain. Isoform 2 is expressed in the granular layer of the dentate gyrus and the pyramidal layer (Py) of the CA1, CA2 and CA3 of the hippocampus (at protein level). Expressed in the cortex, thalamus, CA1, CA2, CA3, dentate gyrus and granular layer of the hippocampus. Weakly expressed in kidney, testis and lung.

The protein resides in the cell membrane. Its subcellular location is the cytoplasm. It is found in the secreted. It localises to the nucleus. The protein localises to the nucleus speckle. The protein resides in the nucleus matrix. Its subcellular location is the cytoskeleton. Involved in neural development, regulating the establishment of proper connectivity within the nervous system. May function as a cellular signal transducer. Functionally, plays a role in the regulation of neuroplasticity in the limbic system. Mediates a rapid reorganization of actin- and tubulin-based cytoskeleton elements with an increase in dendritic arborization and spine density formation of neurons in the hippocampus and amygdala. Induces BDNF transcription inhibition in neurons. Activates the mitogen-activated protein (MAP) kinase 2 (MEK2) and extracellular signal-regulated kinase (ERK) cascade. Also acts as a bioactive neuroprotective peptide on limbic neurons of the brain and regulates stress-induced behavior: attenuates alkalosis-associated necrotic cell death and the effects of corticotropin-releasing factor (CRF) on c-fos/FOS induction and on the reinstatement of cocaine seeking. Its function is as follows. Induces gene transcription activation. The chain is Teneurin-1 (Tenm1) from Mus musculus (Mouse).